Reading from the N-terminus, the 422-residue chain is MSAQLEADVRTMSPEMPAMFDGMKLAAVAAVLYVIVRSLNLKCPTAAADITCQDTLLNHYLLKSCPVLTKEYIPPLLWGKSGHLQTALYGKIGRVKSPKPCGLRKFLPMQDGATATFDLFEPQGVHSTGDDITMVICPGIGNHSEKHYIRTFVDYSQKQGYRCAVLNHLGALPNIELTSPRMFTYGCTWEFSAMVGFIKRTFPQTQLIVVGFSLGGNIACKYLGENPANQERVLCCVSVCQGYSALRAQETFLQWDQCRRLYNFLMADNMKKIILSHRGSLFGMNSSRMEFADLSRLYTATSLMQIDDNIMRKFHGHNSLKEYYEKESCVHYIHNISVPLLLVNSSDDPLVHQSLLTIPRTLAEKKQNVIFALTLHGGHLGFFEGAVLFPQPLSWMDKVIVSYANAVCQWEKHKPQCHQQKE.

Residues 1-15 are Cytoplasmic-facing; the sequence is MSAQLEADVRTMSPE. Residues 16-36 form a helical; Signal-anchor for type II membrane protein membrane-spanning segment; it reads MPAMFDGMKLAAVAAVLYVIV. Residues 37-422 lie on the Extracellular side of the membrane; it reads RSLNLKCPTA…HKPQCHQQKE (386 aa). Residues 134 to 385 form the AB hydrolase-1 domain; the sequence is MVICPGIGNH…HGGHLGFFEG (252 aa). A glycan (N-linked (GlcNAc...) asparagine) is linked at Asn142. The Nucleophile role is filled by Ser213. Residues Asn285, Asn335, and Asn344 are each glycosylated (N-linked (GlcNAc...) asparagine). Catalysis depends on charge relay system residues Asp348 and His379.

It belongs to the AB hydrolase superfamily. AB hydrolase 4 family.

It localises to the cell membrane. The catalysed reaction is Hydrolyzes glycerol monoesters of long-chain fatty acids.. It carries out the reaction an acetyl ester + H2O = an aliphatic alcohol + acetate + H(+). The enzyme catalyses a triacylglycerol + H2O = a diacylglycerol + a fatty acid + H(+). It catalyses the reaction 2-(5Z,8Z,11Z,14Z-eicosatetraenoyl)-glycerol + H2O = glycerol + (5Z,8Z,11Z,14Z)-eicosatetraenoate + H(+). The catalysed reaction is a butanoate ester + H2O = an aliphatic alcohol + butanoate + H(+). It carries out the reaction hexadecanoate ester + H2O = an aliphatic alcohol + hexadecanoate + H(+). Acylglycerol lipase activity is activated upon binding to progesterone. Functionally, progesterone-dependent acylglycerol lipase that catalyzes hydrolysis of endocannabinoid arachidonoylglycerol (AG) from cell membrane. Acts as a progesterone receptor: progesterone-binding activates the acylglycerol lipase activity, mediating degradation of 1-arachidonoylglycerol (1AG) and 2-arachidonoylglycerol (2AG) to glycerol and arachidonic acid (AA). Also displays an ester hydrolase activity against acetyl ester, butanoate ester and hexadecanoate ester. Plays a key role in sperm capacitation in response to progesterone by mediating degradation of 2AG, an inhibitor of the sperm calcium channel CatSper, leading to calcium influx via CatSper and sperm activation. May also play a role in smooth muscle cells migration. The chain is Monoacylglycerol lipase ABHD2 (abhd2b) from Danio rerio (Zebrafish).